Reading from the N-terminus, the 329-residue chain is GTPase Obg (329 aa).

In terms of domain architecture, Obg spans 1–159 (MQFIDQARIS…WPLQLELKLL (159 aa)). The OBG-type G domain occupies 160–328 (AEVGIIGLPN…MLDRVWSELG (169 aa)). ATP-binding positions include 166 to 173 (GLPNAGKS), 191 to 195 (FTTLI), 213 to 216 (DIPG), 280 to 283 (NKQE), and 309 to 311 (SAA). Mg(2+) contacts are provided by Ser173 and Thr193.

Belongs to the TRAFAC class OBG-HflX-like GTPase superfamily. OBG GTPase family. In terms of assembly, monomer. Mg(2+) serves as cofactor.

The protein resides in the cytoplasm. In terms of biological role, an essential GTPase which binds GTP, GDP and possibly (p)ppGpp with moderate affinity, with high nucleotide exchange rates and a fairly low GTP hydrolysis rate. Plays a role in control of the cell cycle, stress response, ribosome biogenesis and in those bacteria that undergo differentiation, in morphogenesis control. This is GTPase Obg from Synechococcus sp. (strain CC9311).